The following is a 636-amino-acid chain: Molybdenum cofactor biosynthesis protein 1 (636 aa).

Positions 1–383 (MAARPLSRML…QMKNRPMILI (383 aa)) are molybdenum cofactor biosynthesis protein A. Residue Ser-64 is modified to Phosphoserine. A Radical SAM core domain is found at 64 to 277 (SFGRQHSYLR…LDTVRQQWPE (214 aa)). Arg-73 is a GTP binding site. 2 residues coordinate [4Fe-4S] cluster: Cys-80 and Cys-84. Tyr-86 is a binding site for S-adenosyl-L-methionine. [4Fe-4S] cluster is bound at residue Cys-87. Arg-123 contributes to the GTP binding site. Gly-127 contributes to the S-adenosyl-L-methionine binding site. GTP is bound at residue Thr-154. Ser-178 contacts S-adenosyl-L-methionine. Lys-198 bears the N6-acetyllysine mark. Lys-215 lines the GTP pocket. Met-249 contacts S-adenosyl-L-methionine. [4Fe-4S] cluster contacts are provided by Cys-312 and Cys-315. Position 317–319 (317–319 (RLR)) interacts with GTP. Cys-329 is a [4Fe-4S] cluster binding site. The segment at 414-636 (MSFSSQVATL…GGQRGDFHRA (223 aa)) is molybdenum cofactor biosynthesis protein C. Residues 456 to 480 (DANSKCLSPGSWASAAPSGPQLTSE) are disordered. A compositionally biased stretch (low complexity) spans 463–475 (SPGSWASAAPSGP). Position 528 is an N6-acetyllysine (Lys-528). The For molybdenum cofactor biosynthesis protein C activity role is filled by Asp-606.

This sequence in the C-terminal section; belongs to the MoaC family. It in the N-terminal section; belongs to the radical SAM superfamily. MoaA family. In terms of assembly, isoform MOCS1A and isoform MOCS1B probably form a heterooligomer. Requires [4Fe-4S] cluster as cofactor. In terms of tissue distribution, isoform MOCS1A and isoform 2 are widely expressed.

It carries out the reaction GTP + AH2 + S-adenosyl-L-methionine = (8S)-3',8-cyclo-7,8-dihydroguanosine 5'-triphosphate + 5'-deoxyadenosine + L-methionine + A + H(+). The enzyme catalyses (8S)-3',8-cyclo-7,8-dihydroguanosine 5'-triphosphate = cyclic pyranopterin phosphate + diphosphate. The protein operates within cofactor biosynthesis; molybdopterin biosynthesis. In terms of biological role, isoform MOCS1A and isoform MOCS1B probably form a complex that catalyzes the conversion of 5'-GTP to cyclic pyranopterin monophosphate (cPMP). MOCS1A catalyzes the cyclization of GTP to (8S)-3',8-cyclo-7,8-dihydroguanosine 5'-triphosphate and MOCS1B catalyzes the subsequent conversion of (8S)-3',8-cyclo-7,8-dihydroguanosine 5'-triphosphate to cPMP. This chain is Molybdenum cofactor biosynthesis protein 1 (MOCS1), found in Homo sapiens (Human).